The chain runs to 390 residues: Dual-specificity RNA methyltransferase RlmN (390 aa).

E110 (proton acceptor) is an active-site residue. One can recognise a Radical SAM core domain in the interval 116–355 (EADRATLCVS…VIIRKTRGDD (240 aa)). Cysteines 123 and 360 form a disulfide. [4Fe-4S] cluster is bound by residues C130, C134, and C137. Residues 184–185 (GE), S216, 238–240 (SLH), and N317 contribute to the S-adenosyl-L-methionine site. C360 functions as the S-methylcysteine intermediate in the catalytic mechanism.

Belongs to the radical SAM superfamily. RlmN family. [4Fe-4S] cluster serves as cofactor.

It is found in the cytoplasm. It catalyses the reaction adenosine(2503) in 23S rRNA + 2 reduced [2Fe-2S]-[ferredoxin] + 2 S-adenosyl-L-methionine = 2-methyladenosine(2503) in 23S rRNA + 5'-deoxyadenosine + L-methionine + 2 oxidized [2Fe-2S]-[ferredoxin] + S-adenosyl-L-homocysteine. The catalysed reaction is adenosine(37) in tRNA + 2 reduced [2Fe-2S]-[ferredoxin] + 2 S-adenosyl-L-methionine = 2-methyladenosine(37) in tRNA + 5'-deoxyadenosine + L-methionine + 2 oxidized [2Fe-2S]-[ferredoxin] + S-adenosyl-L-homocysteine. In terms of biological role, specifically methylates position 2 of adenine 2503 in 23S rRNA and position 2 of adenine 37 in tRNAs. m2A2503 modification seems to play a crucial role in the proofreading step occurring at the peptidyl transferase center and thus would serve to optimize ribosomal fidelity. The polypeptide is Dual-specificity RNA methyltransferase RlmN (Haemophilus influenzae (strain 86-028NP)).